The chain runs to 258 residues: UPF0246 protein YPK_3600 (258 aa).

It belongs to the UPF0246 family.

In Yersinia pseudotuberculosis serotype O:3 (strain YPIII), this protein is UPF0246 protein YPK_3600.